A 588-amino-acid chain; its full sequence is Snake venom 5'-nucleotidase (588 aa).

The first 40 residues, 1–40 (MQTPKRRRGAQGCPRSSPSPPLLLLVGAVWFCAALSVAAG), serve as a signal peptide directing secretion. Asp-51 and His-53 together coordinate Zn(2+). A disulfide bridge links Cys-66 with Cys-71. Asn-88 carries an N-linked (GlcNAc...) asparagine glycan. The Zn(2+) site is built by Asp-99 and Asn-131. N-linked (GlcNAc...) asparagine glycosylation occurs at Asn-167. Zn(2+) is bound by residues His-234 and His-257. Residues Asn-327, Asn-347, and Asn-361 are each glycosylated (N-linked (GlcNAc...) asparagine). 2 disulfides stabilise this stretch: Cys-367-Cys-372 and Cys-379-Cys-401. Arg-368 provides a ligand contact to AMP. 2 residues coordinate AMP: Asn-404 and Arg-409. N-linked (GlcNAc...) asparagine glycosylation is present at Asn-418. Phe-432 is a binding site for AMP. An intrachain disulfide couples Cys-491 to Cys-494. Residues Phe-515 and Asp-521 each contribute to the AMP site. N-linked (GlcNAc...) asparagine glycosylation occurs at Asn-532. Ser-564 carries GPI-anchor amidated serine lipidation. Residues 565 to 588 (AGTLFQAQLFLTWGLCISLLYFIL) constitute a propeptide, removed in mature form.

This sequence belongs to the 5'-nucleotidase family. Zn(2+) serves as cofactor. Venom 5'-nucleotidases (or a part thereof) may be released into the venom via exosome-like vesicles. They may be attached via a GPI anchor to the membrane of these vesicles. Soluble forms of 5'-nucleotidase might be released by cleavage of the ectodomain in the exosome-like vesicles or venom gland cells. As to expression, expressed by the venom gland.

It is found in the membrane. The enzyme catalyses a ribonucleoside 5'-phosphate + H2O = a ribonucleoside + phosphate. In terms of biological role, hydrolyzes nucleotides into nucleosides. Snake venom 5'-nucleotidases are widely distributed among venomous snake taxa, but there is a lack of information about their biological activities. They have been shown to inhibit platelet aggregation. This effect may be due to the liberation of inhibitory AMP or adenosine by its action on ADP released upon initiation of aggregation. Venom 5'-nucleotidases are also known to synergistically act in vivo with other toxins like ADPases, phospholipases, and disintegrins to exert a more pronounced anti-coagulant effect. The protein is Snake venom 5'-nucleotidase of Gloydius brevicauda (Korean slamosa snake).